The sequence spans 78 residues: UPF0401 protein YubL (78 aa).

It belongs to the UPF0401 family.

The polypeptide is UPF0401 protein YubL (yubL) (Salmonella typhi).